Here is a 209-residue protein sequence, read N- to C-terminus: Large ribosomal subunit protein uL4 (209 aa).

A disordered region spans residues 45–78; that stretch reads RQGTHKAKERAEVAGSTRKIKKQKGTGTARAGSA.

It belongs to the universal ribosomal protein uL4 family. As to quaternary structure, part of the 50S ribosomal subunit.

In terms of biological role, one of the primary rRNA binding proteins, this protein initially binds near the 5'-end of the 23S rRNA. It is important during the early stages of 50S assembly. It makes multiple contacts with different domains of the 23S rRNA in the assembled 50S subunit and ribosome. Functionally, forms part of the polypeptide exit tunnel. In Flavobacterium psychrophilum (strain ATCC 49511 / DSM 21280 / CIP 103535 / JIP02/86), this protein is Large ribosomal subunit protein uL4.